Consider the following 317-residue polypeptide: D-alanine--D-alanine ligase (317 aa).

The region spanning 103–299 (KHIFRSLNID…FNELVKIIIE (197 aa)) is the ATP-grasp domain. 130–183 (KIDYPYVLKPINEGSSIGVYIIFSHEDYLELKDNSSTIMEKMIVEEYIPGIELH) is an ATP binding site. Positions 251, 265, and 267 each coordinate Mg(2+).

This sequence belongs to the D-alanine--D-alanine ligase family. It depends on Mg(2+) as a cofactor. The cofactor is Mn(2+).

Its subcellular location is the cytoplasm. The enzyme catalyses 2 D-alanine + ATP = D-alanyl-D-alanine + ADP + phosphate + H(+). The protein operates within cell wall biogenesis; peptidoglycan biosynthesis. Functionally, cell wall formation. This Wolbachia sp. subsp. Drosophila simulans (strain wRi) protein is D-alanine--D-alanine ligase.